The sequence spans 158 residues: N-alpha-acetyltransferase RimI (158 aa).

Residues 8–155 (VTIGALTRAD…DAYTMRRDSG (148 aa)) form the N-acetyltransferase domain.

The protein belongs to the acetyltransferase family. RimI subfamily. Monomer. Interacts with TsaD. Interacts with GroS/GroES.

It catalyses the reaction N-terminal L-methionyl-L-alanyl-[protein] + acetyl-CoA = N-terminal N(alpha)-acetyl-L-methionyl-L-alanyl-[protein] + CoA + H(+). The enzyme catalyses N-terminal L-methionyl-L-seryl-[protein] + acetyl-CoA = N-terminal N(alpha)-acetyl-L-methionyl-L-seryl-[protein] + CoA + H(+). The catalysed reaction is N-terminal L-methionyl-L-valyl-[protein] + acetyl-CoA = N-terminal N(alpha)-acetyl-L-methionyl-L-valyl-[protein] + CoA + H(+). It carries out the reaction N-terminal L-methionyl-L-threonyl-[protein] + acetyl-CoA = N-terminal N(alpha)-acetyl-L-methionyl-L-threonyl-[protein] + CoA + H(+). It catalyses the reaction N-terminal L-methionyl-L-lysyl-[protein] + acetyl-CoA = N-terminal N(alpha)-acetyl-L-methionyl-L-lysyl-[protein] + CoA + H(+). The enzyme catalyses N-terminal L-methionyl-L-leucyl-[protein] + acetyl-CoA = N-terminal N(alpha)-acetyl-L-methionyl-L-leucyl-[protein] + CoA + H(+). The catalysed reaction is N-terminal L-methionyl-L-phenylalanyl-[protein] + acetyl-CoA = N-terminal N(alpha)-acetyl-L-methionyl-L-phenylalanyl-[protein] + CoA + H(+). It carries out the reaction N-terminal L-methionyl-L-tyrosyl-[protein] + acetyl-CoA = N-terminal N(alpha)-acetyl-L-methionyl-L-tyrosyl-[protein] + CoA + H(+). It catalyses the reaction N-terminal glycyl-[protein] + acetyl-CoA = N-terminal N(alpha)-acetylglycyl-[protein] + CoA + H(+). The enzyme catalyses N-terminal L-alanyl-[protein] + acetyl-CoA = N-terminal N(alpha)-acetyl-L-alanyl-[protein] + CoA + H(+). The catalysed reaction is N-terminal L-seryl-[protein] + acetyl-CoA = N-terminal N(alpha)-acetyl-L-seryl-[protein] + CoA + H(+). It carries out the reaction N-terminal L-valyl-[protein] + acetyl-CoA = N-terminal N(alpha)-acetyl-L-valyl-[protein] + CoA + H(+). It catalyses the reaction N-terminal L-cysteinyl-[protein] + acetyl-CoA = N-terminal N(alpha)-acetyl-L-cysteinyl-[protein] + CoA + H(+). The enzyme catalyses N-terminal L-threonyl-[protein] + acetyl-CoA = N-terminal N(alpha)-acetyl-L-threonyl-[protein] + CoA + H(+). Its function is as follows. N-alpha-acetyltransferase that specifically mediates the acetylation of N-terminal residues. Able to mediate acetylation of a wide variety of N-terminal residues, with preference for hydrophobic N-termini. Acetylates GroS/GroES and GroEL1. Able to acetylate the ribosomal protein bS18, but it is unclear whether it acetylates its N-terminal alanine residue. This Mycobacterium tuberculosis (strain ATCC 25618 / H37Rv) protein is N-alpha-acetyltransferase RimI.